We begin with the raw amino-acid sequence, 154 residues long: Large ribosomal subunit protein uL23 (154 aa).

The interval 1–39 (MAPAKADPSKKSDPKAQAAKVAKAVKSGSTLKKKSQKIR) is disordered. The segment covering 15-26 (KAQAAKVAKAVK) has biased composition (low complexity).

The protein belongs to the universal ribosomal protein uL23 family.

This protein binds to a specific region on the 26S rRNA. In Nicotiana tabacum (Common tobacco), this protein is Large ribosomal subunit protein uL23 (RPL23A).